The following is a 149-amino-acid chain: Large ribosomal subunit protein uL16c (149 aa).

Belongs to the universal ribosomal protein uL16 family. Part of the 50S ribosomal subunit.

It localises to the plastid. The protein resides in the organellar chromatophore. The sequence is that of Large ribosomal subunit protein uL16c (rpl16) from Paulinella chromatophora.